The chain runs to 154 residues: MVKAVAVLRGDSNIKGTVTFEQADENSPTTISWNITGHDANAERGIHVHQFGDNTNGCTSAGPHFNPFGKTHGAPTDDERHVGDLGNFKTDAQGNAVGFVEDKLIKLIGAESVLGRTIVVHAGTDDLGRGGNEESKKTGNAGPRPACGVIGISA.

Cu cation is bound by residues histidine 47, histidine 49, and histidine 64. An intrachain disulfide couples cysteine 58 to cysteine 147. Residues histidine 64, histidine 72, histidine 81, and aspartate 84 each contribute to the Zn(2+) site. Histidine 121 provides a ligand contact to Cu cation. Positions 126-137 (DLGRGGNEESKK) are enriched in basic and acidic residues. The disordered stretch occupies residues 126–147 (DLGRGGNEESKKTGNAGPRPAC).

It belongs to the Cu-Zn superoxide dismutase family. In terms of assembly, homodimer. The cofactor is Cu cation. Zn(2+) is required as a cofactor.

The protein resides in the cytoplasm. It carries out the reaction 2 superoxide + 2 H(+) = H2O2 + O2. Destroys radicals which are normally produced within the cells and which are toxic to biological systems. Plays an important role in the phase transition, and may be important in vivo, as it would facilitate the intracellular survival of the fungus by providing a non-toxic environment in the macrophage phagolysosomes. In Talaromyces marneffei (Penicillium marneffei), this protein is Superoxide dismutase [Cu-Zn].